The sequence spans 438 residues: Ribosomal protein uS12 methylthiotransferase RimO (438 aa).

The 111-residue stretch at 5–115 (PRVGFVSLGC…VMSAVHTHLP (111 aa)) folds into the MTTase N-terminal domain. Residues Cys-14, Cys-50, Cys-79, Cys-146, Cys-150, and Cys-153 each contribute to the [4Fe-4S] cluster site. A Radical SAM core domain is found at 132-369 (LTPKHYAYLK…MAVQAEISAR (238 aa)). The TRAM domain maps to 372–438 (ERRVGQTLQV…SEHDLWGERR (67 aa)).

This sequence belongs to the methylthiotransferase family. RimO subfamily. [4Fe-4S] cluster is required as a cofactor.

The protein resides in the cytoplasm. The enzyme catalyses L-aspartate(89)-[ribosomal protein uS12]-hydrogen + (sulfur carrier)-SH + AH2 + 2 S-adenosyl-L-methionine = 3-methylsulfanyl-L-aspartate(89)-[ribosomal protein uS12]-hydrogen + (sulfur carrier)-H + 5'-deoxyadenosine + L-methionine + A + S-adenosyl-L-homocysteine + 2 H(+). Its function is as follows. Catalyzes the methylthiolation of an aspartic acid residue of ribosomal protein uS12. The chain is Ribosomal protein uS12 methylthiotransferase RimO from Chromobacterium violaceum (strain ATCC 12472 / DSM 30191 / JCM 1249 / CCUG 213 / NBRC 12614 / NCIMB 9131 / NCTC 9757 / MK).